The following is a 305-amino-acid chain: 2-oxoacid:ferredoxin oxidoreductase subunit beta (305 aa).

[4Fe-4S] cluster is bound by residues Cys-12, Cys-15, and Cys-46. Thiamine diphosphate contacts are provided by residues 44–47 and His-65; that span reads IGCS. Asp-90 is a binding site for Mg(2+). Thiamine diphosphate is bound at residue 91–92; it reads GD. Residues Asn-118 and Val-120 each coordinate Mg(2+). Residue 122–123 coordinates thiamine diphosphate; it reads GL. [4Fe-4S] cluster is bound at residue Cys-197.

As to quaternary structure, heterodimer composed of an alpha and a beta subunit. It depends on [4Fe-4S] cluster as a cofactor. Thiamine diphosphate is required as a cofactor. Mg(2+) serves as cofactor.

It is found in the cytoplasm. The catalysed reaction is a 2-oxocarboxylate + 2 oxidized [2Fe-2S]-[ferredoxin] + CoA = an acyl-CoA + 2 reduced [2Fe-2S]-[ferredoxin] + CO2 + H(+). In terms of biological role, catalyzes the coenzyme A-dependent oxidative decarboxylation of different 2-oxoacids such as 2-oxoglutarate, pyruvate and 2-oxobutyrate to form their CoA derivatives. This Sulfolobus sp protein is 2-oxoacid:ferredoxin oxidoreductase subunit beta.